The chain runs to 124 residues: UPF0102 protein Meso_4010 (124 aa).

Belongs to the UPF0102 family.

In Chelativorans sp. (strain BNC1), this protein is UPF0102 protein Meso_4010.